We begin with the raw amino-acid sequence, 172 residues long: Melanocortin-2 receptor accessory protein (172 aa).

A helical membrane pass occupies residues 38–58; that stretch reads IVIAFWVSLAAFVVLLFLILL. 2 disordered regions span residues 105 to 130 and 152 to 172; these read QAQA…SSST and PLVR…QLQS.

The protein belongs to the MRAP family. Homodimer and heterodimer. Forms antiparallel homodimers and heterodimers with MRAP2. Interacts with MC1R, MC2R, MC3R, MC4R and MC5R.

The protein resides in the cell membrane. It localises to the endoplasmic reticulum membrane. Its function is as follows. Modulator of melanocortin receptors (MC1R, MC2R, MC3R, MC4R and MC5R). Acts by increasing ligand-sensitivity of melanocortin receptors and enhancing generation of cAMP by the receptors. Required both for MC2R trafficking to the cell surface of adrenal cells and for signaling in response to corticotropin (ACTH). May be involved in the intracellular trafficking pathways in adipocyte cells. The protein is Melanocortin-2 receptor accessory protein (MRAP) of Pan troglodytes (Chimpanzee).